The following is a 403-amino-acid chain: Acetylornithine aminotransferase (403 aa).

Residues 107–108 (GA) and Phe140 contribute to the pyridoxal 5'-phosphate site. A N(2)-acetyl-L-ornithine-binding site is contributed by Arg143. 225–228 (DEVQ) contacts pyridoxal 5'-phosphate. N6-(pyridoxal phosphate)lysine is present on Lys254. Ser282 contributes to the N(2)-acetyl-L-ornithine binding site. Residue Thr283 coordinates pyridoxal 5'-phosphate.

It belongs to the class-III pyridoxal-phosphate-dependent aminotransferase family. ArgD subfamily. As to quaternary structure, homodimer. It depends on pyridoxal 5'-phosphate as a cofactor.

The protein resides in the cytoplasm. The enzyme catalyses N(2)-acetyl-L-ornithine + 2-oxoglutarate = N-acetyl-L-glutamate 5-semialdehyde + L-glutamate. Its pathway is amino-acid biosynthesis; L-arginine biosynthesis; N(2)-acetyl-L-ornithine from L-glutamate: step 4/4. The sequence is that of Acetylornithine aminotransferase from Vibrio parahaemolyticus serotype O3:K6 (strain RIMD 2210633).